A 324-amino-acid polypeptide reads, in one-letter code: MYVLGIEGTAWNLSAAIVNEDDVIIERAATYTPARGGIHPREAAQHHSEHIGPLLREVIQGARDLGIKIDGVAFSQGPGLGPCLRTVATAARVLALKLNVPLVGVNHCIAHIEIGKWKTGARDPAVLYVSGGNSQVLALRRGRYRIFGETLDISVGNMLDKFARSVGLPHPGGPRIEELARNAKEYIPLPYTVKGMDFSFSGLATAAAEAARRYDLEDVCYSLQETAFAMLVEVTERAMAHAEKKEAMLVGGVGANRRLGEMLRLMCEERGARFYLPERRFMGDNGSMIAYTGLVMLKSGVSTPIESSGVRPNYRTDEVEVRWA.

His107, His111, and Tyr128 together coordinate Fe cation. Substrate contacts are provided by residues 128-132, Asp160, Gly173, Glu177, and Asn256; that span reads YVSGG. Asp284 is a Fe cation binding site.

Belongs to the KAE1 / TsaD family. As to quaternary structure, monomer. Component of the KEOPS complex that consists of Kae1, Bud32, Cgi121 and Pcc1; the whole complex dimerizes. The cofactor is Fe(2+).

The protein resides in the cytoplasm. The enzyme catalyses L-threonylcarbamoyladenylate + adenosine(37) in tRNA = N(6)-L-threonylcarbamoyladenosine(37) in tRNA + AMP + H(+). Its function is as follows. Required for the formation of a threonylcarbamoyl group on adenosine at position 37 (t(6)A37) in tRNAs that read codons beginning with adenine. Is a component of the KEOPS complex that is probably involved in the transfer of the threonylcarbamoyl moiety of threonylcarbamoyl-AMP (TC-AMP) to the N6 group of A37. Kae1 likely plays a direct catalytic role in this reaction, but requires other protein(s) of the complex to fulfill this activity. The sequence is that of tRNA N6-adenosine threonylcarbamoyltransferase from Methanothrix thermoacetophila (strain DSM 6194 / JCM 14653 / NBRC 101360 / PT) (Methanosaeta thermophila).